The chain runs to 712 residues: Polyribonucleotide nucleotidyltransferase (712 aa).

Mg(2+)-binding residues include D485 and D491. The KH domain maps to 552-611; sequence PKITTISVPKEKIRDVIGQGGKVIREIVEYSGAKIDINDDGTIMIAASSEDQATRAIERI. The S1 motif domain maps to 621–689; sequence GAIYTGKVVK…DRGKVKLSMR (69 aa).

It belongs to the polyribonucleotide nucleotidyltransferase family. The cofactor is Mg(2+).

It localises to the cytoplasm. The catalysed reaction is RNA(n+1) + phosphate = RNA(n) + a ribonucleoside 5'-diphosphate. Involved in mRNA degradation. Catalyzes the phosphorolysis of single-stranded polyribonucleotides processively in the 3'- to 5'-direction. This Gluconacetobacter diazotrophicus (strain ATCC 49037 / DSM 5601 / CCUG 37298 / CIP 103539 / LMG 7603 / PAl5) protein is Polyribonucleotide nucleotidyltransferase.